We begin with the raw amino-acid sequence, 80 residues long: Sec-independent protein translocase protein TatA (80 aa).

A helical membrane pass occupies residues M1 to G21. The disordered stretch occupies residues S38–G80. Residues G58 to G80 are compositionally biased toward basic and acidic residues.

This sequence belongs to the TatA/E family. As to quaternary structure, the Tat system comprises two distinct complexes: a TatABC complex, containing multiple copies of TatA, TatB and TatC subunits, and a separate TatA complex, containing only TatA subunits. Substrates initially bind to the TatABC complex, which probably triggers association of the separate TatA complex to form the active translocon.

The protein resides in the cell inner membrane. Part of the twin-arginine translocation (Tat) system that transports large folded proteins containing a characteristic twin-arginine motif in their signal peptide across membranes. TatA could form the protein-conducting channel of the Tat system. This Erythrobacter litoralis (strain HTCC2594) protein is Sec-independent protein translocase protein TatA.